A 211-amino-acid chain; its full sequence is Redox-sensing transcriptional repressor Rex (211 aa).

Residues 17–56 constitute a DNA-binding region (H-T-H motif); it reads KYHRYLEELMKNEVDRISSKELGEKIGFTASQIRQDLNCF. An NAD(+)-binding site is contributed by 91 to 96; the sequence is GAGNIG.

The protein belongs to the transcriptional regulatory Rex family. As to quaternary structure, homodimer.

The protein localises to the cytoplasm. In terms of biological role, modulates transcription in response to changes in cellular NADH/NAD(+) redox state. This is Redox-sensing transcriptional repressor Rex from Clostridium beijerinckii (strain ATCC 51743 / NCIMB 8052) (Clostridium acetobutylicum).